Here is a 607-residue protein sequence, read N- to C-terminus: Tyrosine-protein kinase RYK (607 aa).

The tract at residues 1–20 (MRGAARLGRPGRSCLPGARG) is disordered. Residues 1–25 (MRGAARLGRPGRSCLPGARGLRAPP) form the signal peptide. Topologically, residues 26 to 227 (PPPLLLLLAL…VHAAPTTSTR (202 aa)) are extracellular. One can recognise a WIF domain in the interval 66–194 (LYLSEDEVRR…VLNFKRRKMC (129 aa)). N139, N174, N178, N182, and N209 each carry an N-linked (GlcNAc...) asparagine glycan. C159 and C194 form a disulfide bridge. A helical transmembrane segment spans residues 228–248 (VFYISVGVCCAVIFLVAIILA). Topologically, residues 249-607 (VLHLHSMKRI…EFHAALGAYV (359 aa)) are cytoplasmic. Low complexity predominate over residues 266–282 (ASSSSQGLSQPSTQTTQ). Residues 266-290 (ASSSSQGLSQPSTQTTQYLRADTPN) are disordered. Residues 330–603 (ITLKDVLQEG…QCLTEFHAAL (274 aa)) form the Protein kinase domain. Residues 336 to 344 (LQEGTFGRI) and K364 each bind ATP. The Proton acceptor role is filled by D465. Phosphotyrosine; by autocatalysis is present on Y495.

This sequence belongs to the protein kinase superfamily. Tyr protein kinase family. As to quaternary structure, interacts with DVL1 (via PDZ domain). Post-translationally, proteolytically cleaved, in part by presenilin, in response to WNT3 stimulation. Cleavage occurs during neuronal differentiation. As to expression, observed in all the tissues examined.

The protein resides in the membrane. It localises to the nucleus. It is found in the cytoplasm. The enzyme catalyses L-tyrosyl-[protein] + ATP = O-phospho-L-tyrosyl-[protein] + ADP + H(+). Its function is as follows. May be a coreceptor along with FZD8 of Wnt proteins, such as WNT1, WNT3, WNT3A and WNT5A. Involved in neuron differentiation, axon guidance, corpus callosum establishment and neurite outgrowth. In response to WNT3 stimulation, receptor C-terminal cleavage occurs in its transmembrane region and allows the C-terminal intracellular product to translocate from the cytoplasm to the nucleus where it plays a crucial role in neuronal development. The chain is Tyrosine-protein kinase RYK from Homo sapiens (Human).